Reading from the N-terminus, the 855-residue chain is Sucrose synthase 5 (855 aa).

Residues 279–758 (SIFNIVIFSI…GLQRICECYT (480 aa)) are GT-B glycosyltransferase.

The protein belongs to the glycosyltransferase 1 family. Plant sucrose synthase subfamily. As to expression, predominantly expressed in roots, flowers and immature seeds.

The protein localises to the cytoplasm. The protein resides in the membrane. It catalyses the reaction an NDP-alpha-D-glucose + D-fructose = a ribonucleoside 5'-diphosphate + sucrose + H(+). Functionally, sucrose-cleaving enzyme that provides UDP-glucose and fructose for various metabolic pathways. The chain is Sucrose synthase 5 (SUS5) from Oryza sativa subsp. japonica (Rice).